Reading from the N-terminus, the 140-residue chain is ATP synthase epsilon chain (140 aa).

This sequence belongs to the ATPase epsilon chain family. As to quaternary structure, F-type ATPases have 2 components, CF(1) - the catalytic core - and CF(0) - the membrane proton channel. CF(1) has five subunits: alpha(3), beta(3), gamma(1), delta(1), epsilon(1). CF(0) has three main subunits: a, b and c.

It is found in the cell inner membrane. Produces ATP from ADP in the presence of a proton gradient across the membrane. The chain is ATP synthase epsilon chain from Xanthomonas axonopodis pv. citri (strain 306).